Here is a 50-residue protein sequence, read N- to C-terminus: Sperm protamine P1 (50 aa).

This sequence belongs to the protamine P1 family. Testis.

The protein localises to the nucleus. The protein resides in the chromosome. Functionally, protamines substitute for histones in the chromatin of sperm during the haploid phase of spermatogenesis. They compact sperm DNA into a highly condensed, stable and inactive complex. This Trachypithecus vetulus (Purple-faced langur) protein is Sperm protamine P1 (PRM1).